Here is a 470-residue protein sequence, read N- to C-terminus: ATP synthase subunit beta (470 aa).

155–162 lines the ATP pocket; sequence GGAGVGKT.

Belongs to the ATPase alpha/beta chains family. In terms of assembly, F-type ATPases have 2 components, CF(1) - the catalytic core - and CF(0) - the membrane proton channel. CF(1) has five subunits: alpha(3), beta(3), gamma(1), delta(1), epsilon(1). CF(0) has three main subunits: a(1), b(2) and c(9-12). The alpha and beta chains form an alternating ring which encloses part of the gamma chain. CF(1) is attached to CF(0) by a central stalk formed by the gamma and epsilon chains, while a peripheral stalk is formed by the delta and b chains.

The protein resides in the cell membrane. The catalysed reaction is ATP + H2O + 4 H(+)(in) = ADP + phosphate + 5 H(+)(out). Produces ATP from ADP in the presence of a proton gradient across the membrane. The catalytic sites are hosted primarily by the beta subunits. This is ATP synthase subunit beta from Staphylococcus saprophyticus subsp. saprophyticus (strain ATCC 15305 / DSM 20229 / NCIMB 8711 / NCTC 7292 / S-41).